The sequence spans 97 residues: UPF0235 protein HAPS_1504 (97 aa).

This sequence belongs to the UPF0235 family.

In Glaesserella parasuis serovar 5 (strain SH0165) (Haemophilus parasuis), this protein is UPF0235 protein HAPS_1504.